We begin with the raw amino-acid sequence, 131 residues long: Protein Turandot M (131 aa).

Positions 1-23 (MNPAIYLSCLVVFSLLLLGKVNA) are cleaved as a signal peptide.

It belongs to the Turandot family.

It is found in the secreted. A humoral factor that may play a role in stress tolerance. Requires Mekk1 expression in the fat body to regulate response to septic injury and consequent immune response. The chain is Protein Turandot M from Drosophila erecta (Fruit fly).